The following is an 89-amino-acid chain: MAKKSKIAKLHHQEALVKKYAEKRKELKAKGDYIGLSKLPRNSSAVRLHNRDRYDGRPHAYMRKFGMSRIKFRELAHKGQIPGVRKASW.

This sequence belongs to the universal ribosomal protein uS14 family. As to quaternary structure, part of the 30S ribosomal subunit. Contacts proteins S3 and S10.

Its function is as follows. Binds 16S rRNA, required for the assembly of 30S particles and may also be responsible for determining the conformation of the 16S rRNA at the A site. The chain is Small ribosomal subunit protein uS14A from Limosilactobacillus reuteri (strain DSM 20016) (Lactobacillus reuteri).